The sequence spans 296 residues: Light-independent protochlorophyllide reductase iron-sulfur ATP-binding protein (296 aa).

Residues 39–44 and K68 each bind ATP; that span reads GIGKST. S43 is a binding site for Mg(2+). [4Fe-4S] cluster-binding residues include C124 and C158. An ATP-binding site is contributed by 209–210; that stretch reads NR.

It belongs to the NifH/BchL/ChlL family. As to quaternary structure, homodimer. Protochlorophyllide reductase is composed of three subunits; ChlL, ChlN and ChlB. The cofactor is [4Fe-4S] cluster.

It catalyses the reaction chlorophyllide a + oxidized 2[4Fe-4S]-[ferredoxin] + 2 ADP + 2 phosphate = protochlorophyllide a + reduced 2[4Fe-4S]-[ferredoxin] + 2 ATP + 2 H2O. Its pathway is porphyrin-containing compound metabolism; chlorophyll biosynthesis (light-independent). Functionally, component of the dark-operative protochlorophyllide reductase (DPOR) that uses Mg-ATP and reduced ferredoxin to reduce ring D of protochlorophyllide (Pchlide) to form chlorophyllide a (Chlide). This reaction is light-independent. The L component serves as a unique electron donor to the NB-component of the complex, and binds Mg-ATP. This Prochlorococcus marinus (strain MIT 9211) protein is Light-independent protochlorophyllide reductase iron-sulfur ATP-binding protein.